The primary structure comprises 397 residues: 8-amino-7-oxononanoate synthase (397 aa).

Position 24 (arginine 24) interacts with substrate. 110-111 (GY) is a binding site for pyridoxal 5'-phosphate. Histidine 135 serves as a coordination point for substrate. Serine 183, histidine 211, and threonine 240 together coordinate pyridoxal 5'-phosphate. Lysine 243 is subject to N6-(pyridoxal phosphate)lysine. Residue threonine 357 coordinates substrate.

Belongs to the class-II pyridoxal-phosphate-dependent aminotransferase family. BioF subfamily. As to quaternary structure, homodimer. Requires pyridoxal 5'-phosphate as cofactor.

The catalysed reaction is 6-carboxyhexanoyl-[ACP] + L-alanine + H(+) = (8S)-8-amino-7-oxononanoate + holo-[ACP] + CO2. It functions in the pathway cofactor biosynthesis; biotin biosynthesis. Catalyzes the decarboxylative condensation of pimeloyl-[acyl-carrier protein] and L-alanine to produce 8-amino-7-oxononanoate (AON), [acyl-carrier protein], and carbon dioxide. The chain is 8-amino-7-oxononanoate synthase from Hydrogenovibrio crunogenus (strain DSM 25203 / XCL-2) (Thiomicrospira crunogena).